The chain runs to 355 residues: Uroporphyrinogen decarboxylase (355 aa).

Substrate contacts are provided by residues 27-31 (RQAGR), Phe-46, Asp-78, Tyr-155, Ser-210, and His-328.

The protein belongs to the uroporphyrinogen decarboxylase family. In terms of assembly, homodimer.

The protein resides in the cytoplasm. It carries out the reaction uroporphyrinogen III + 4 H(+) = coproporphyrinogen III + 4 CO2. It participates in porphyrin-containing compound metabolism; protoporphyrin-IX biosynthesis; coproporphyrinogen-III from 5-aminolevulinate: step 4/4. Catalyzes the decarboxylation of four acetate groups of uroporphyrinogen-III to yield coproporphyrinogen-III. This Pseudomonas aeruginosa (strain ATCC 15692 / DSM 22644 / CIP 104116 / JCM 14847 / LMG 12228 / 1C / PRS 101 / PAO1) protein is Uroporphyrinogen decarboxylase.